The following is a 1219-amino-acid chain: Type IV pilus biogenesis factor PilY1 homolog PD_0502 (1219 aa).

An N-terminal signal peptide occupies residues Met-1–Ala-35. Positions Gly-212–Ser-234 are disordered. 4 residues coordinate Ca(2+): Gln-958, Asn-960, Ile-962, and Asp-964.

This sequence belongs to the PilY1 family.

The protein localises to the fimbrium. In terms of biological role, one of the three PilY1 homologs of X.fastidiosa, which are involved in bacterial twitching motility as component of the filamentous type IV pili (T4P). This is Type IV pilus biogenesis factor PilY1 homolog PD_0502 from Xylella fastidiosa (strain Temecula1 / ATCC 700964).